The primary structure comprises 1803 residues: Transposon Ty4-J Gag-Pol polyprotein (1803 aa).

The stretch at 39–115 forms a coiled coil; that stretch reads RKVSIKDEQV…IQLLETNENN (77 aa). Residues 382–502 form a ty4 protease region; sequence NNHLSPVQNE…KTKMVLSRKY (121 aa). The active-site For protease activity; shared with dimeric partner is the Asp-415. The segment at 540-600 is integrase-type zinc finger-like; that stretch reads AIKPTSSPGF…EPNEFWCQTC (61 aa). Residues 620–787 enclose the Integrase catalytic domain; that stretch reads TDHEPGSSWC…LPLKAISRQP (168 aa). Residues Asp-631 and Asp-696 each contribute to the Mg(2+) site. Residues 1224–1250 are disordered; it reads KRKRKRHDKNNSLTSYELERDKKRSKK. Residues 1376-1511 form the Reverse transcriptase Ty1/copia-type domain; sequence RNMFMKTLDI…DILGMDLVYN (136 aa). Residues Asp-1384, Asp-1463, Asp-1464, Asp-1645, Glu-1687, and Asp-1721 each contribute to the Mg(2+) site. The RNase H Ty1/copia-type domain maps to 1645–1791; the sequence is DASVGSEYDA…KRFIQVLKNK (147 aa).

As to quaternary structure, the protease is a homodimer, whose active site consists of two apposed aspartic acid residues. In terms of processing, proteolytically processed into capsid protein (CA), Ty4 protease (PR), integrase (IN) and reverse transcriptase/ribonuclease H (RT) proteins. Initially, virus-like particles (VLPs) are composed of the structural unprocessed proteins Gag and Gag-Pol, and also contain the host initiator methionine tRNA (tRNA(i)-Met) which serves as a primer for minus-strand DNA synthesis, and a dimer of genomic Ty RNA. Processing of the polyproteins occurs within the particle and proceeds by an ordered pathway, called maturation. First, the protease (PR) is released by autocatalytic cleavage of the Gag-Pol polyprotein, and this cleavage is a prerequisite for subsequent processing at the remaining sites to release the mature structural and catalytic proteins. Maturation takes place prior to the RT reaction and is required to produce transposition-competent VLPs.

The protein localises to the cytoplasm. Its subcellular location is the nucleus. The catalysed reaction is DNA(n) + a 2'-deoxyribonucleoside 5'-triphosphate = DNA(n+1) + diphosphate. The enzyme catalyses Endonucleolytic cleavage to 5'-phosphomonoester.. In terms of biological role, capsid protein (CA) is the structural component of the virus-like particle (VLP), forming the shell that encapsulates the retrotransposons dimeric RNA genome. The aspartyl protease (PR) mediates the proteolytic cleavages of the Gag and Gag-Pol polyproteins after assembly of the VLP. Functionally, reverse transcriptase/ribonuclease H (RT) is a multifunctional enzyme that catalyzes the conversion of the retro-elements RNA genome into dsDNA within the VLP. The enzyme displays a DNA polymerase activity that can copy either DNA or RNA templates, and a ribonuclease H (RNase H) activity that cleaves the RNA strand of RNA-DNA heteroduplexes during plus-strand synthesis and hydrolyzes RNA primers. The conversion leads to a linear dsDNA copy of the retrotransposon that includes long terminal repeats (LTRs) at both ends. Its function is as follows. Integrase (IN) targets the VLP to the nucleus, where a subparticle preintegration complex (PIC) containing at least integrase and the newly synthesized dsDNA copy of the retrotransposon must transit the nuclear membrane. Once in the nucleus, integrase performs the integration of the dsDNA into the host genome. The chain is Transposon Ty4-J Gag-Pol polyprotein (TY4B-J) from Saccharomyces cerevisiae (strain ATCC 204508 / S288c) (Baker's yeast).